We begin with the raw amino-acid sequence, 1010 residues long: Antigenic heat-stable 120 kDa protein (1010 aa).

Disordered regions lie at residues 1–34 and 347–396; these read DTSE…QTTT and GQSK…QSQQ. The span at 12-27 shows a compositional bias: basic and acidic residues; sequence EYTEEQKQTLEQEQKE. Composition is skewed to polar residues over residues 347-372 and 379-396; these read GQSK…QHKQ and PTNQ…QSQQ.

The protein resides in the cytoplasm. This Rickettsia parkeri protein is Antigenic heat-stable 120 kDa protein (sca4).